The sequence spans 352 residues: MTSTMKLFTDHAEISVRERPPQRNNNNQEQDNSNRPAPRRLFGLNEKYNFDQPETTFDKLLHQICLGNYEQVDDKIINDSITLAALRKYSCEYKDLKPEKAPKLKNECMKQFAQPGQVVEIIGIDLPLDSSIDQDDLYDLKDDNDVIPVLRVYQSAQDARTKTTENKKDYILDTRVIPDNFAASLFLKSVLRAILLQIFSSLQNQLVKTDVATNPEFMRMSNAFASTRRGPFYNIASLVPALSYPDSRSVPLIVGFILTQENLSLLSLYSMIVTTKVSSTIMALYENNSSEEECEDSISAASCTNQSNVNNSDNIRMTITLPCGLTIAFFVYYRYTLFQRRVKCSTSILLSS.

Positions M1–R40 are disordered. A compositionally biased stretch (basic and acidic residues) spans F8–P21. The segment covering Q22–P36 has biased composition (low complexity). Residues M317–Y333 traverse the membrane as a helical segment.

The protein resides in the host cell membrane. This is an uncharacterized protein from Diadromus pulchellus idnoreovirus 1 (DpIRV-1).